The primary structure comprises 522 residues: UPF0288 protein MTH_1865 (522 aa).

The protein belongs to the UPF0288 family.

The protein is UPF0288 protein MTH_1865 of Methanothermobacter thermautotrophicus (strain ATCC 29096 / DSM 1053 / JCM 10044 / NBRC 100330 / Delta H) (Methanobacterium thermoautotrophicum).